The following is a 343-amino-acid chain: Nicotianamine synthase 3 (343 aa).

The protein belongs to the nicotianamine synthase (NAS)-like family. In terms of tissue distribution, expressed in leaves.

It carries out the reaction 3 S-adenosyl-L-methionine = nicotianamine + 3 S-methyl-5'-thioadenosine + 3 H(+). In terms of biological role, synthesizes nicotianamine, a polyamine that is the first intermediate in the synthesis of the phytosiderophores of the mugineic acid type found in gramineae which serve as a sensor for the physiological iron status within the plant, and/or might be involved in the transport of iron. The chain is Nicotianamine synthase 3 (NAS3) from Oryza sativa subsp. indica (Rice).